Consider the following 460-residue polypeptide: Ecdysteroid UDP-glucosyltransferase (460 aa).

The N-terminal stretch at 1-18 (MFISILLLALAVERILCA) is a signal peptide.

The protein belongs to the UDP-glycosyltransferase family.

Functionally, catalyzes the transfer of glucose from UDP-glucose to ecdysteroids which are insect molting hormones. Expression of egt interferes with normal insect development and block molting. The sequence is that of Ecdysteroid UDP-glucosyltransferase (EGT) from Lacanobia oleracea granulosis virus (LoGV).